The primary structure comprises 972 residues: DNA topoisomerase 1 (972 aa).

2 disordered regions span residues 1-210 (MSGD…VFVK) and 300-416 (HEQS…RQKA). Positions 11 to 31 (IHIQNGGSCEVVQSNGVTTNG) are enriched in polar residues. The span at 32–50 (HGHHHHHHSSSSSSSKHKS) shows a compositional bias: basic residues. 3 stretches are compositionally biased toward basic and acidic residues: residues 51–65 (SSKDKHRDREREHKS), 72–86 (SKEHKSSSRDKDRHK), and 93–103 (KHRDKDKERDG). Over residues 104–114 (SSNSHRSGSSS) the composition is skewed to low complexity. Positions 125–138 (SKHKSSSGHHKRSS) are enriched in basic residues. Residues 139-151 (KDKERRDKDKDRG) are compositionally biased toward basic and acidic residues. The span at 173–183 (SHKSSSSSSSS) shows a compositional bias: low complexity. Ser-303 carries the post-translational modification Phosphoserine. At Tyr-304 the chain carries Phosphotyrosine. Positions 316–330 (HDDDADEMNDDEEDV) are enriched in acidic residues. Interaction with DNA stretches follow at residues 648–649 (KY), 711–716 (RAGNEK), and 807–809 (TAK). Residues 655-972 (SSKLKGEKDH…VHMADENYRF (318 aa)) form the Topo IB-type catalytic domain. Tyr-930 functions as the O-(3'-phospho-DNA)-tyrosine intermediate in the catalytic mechanism.

The protein belongs to the type IB topoisomerase family. As to quaternary structure, interacts with Topors.

The protein resides in the nucleus. It is found in the cytoplasm. The enzyme catalyses ATP-independent breakage of single-stranded DNA, followed by passage and rejoining.. Functionally, releases the supercoiling and torsional tension of DNA introduced during the DNA replication and transcription by transiently cleaving and rejoining one strand of the DNA duplex. Introduces a single-strand break via transesterification at a target site in duplex DNA. The scissile phosphodiester is attacked by the catalytic tyrosine of the enzyme, resulting in the formation of a DNA-(3'-phosphotyrosyl)-enzyme intermediate and the expulsion of a 5'-OH DNA strand. The free DNA strand then undergoes passage around the unbroken strand thus removing DNA supercoils. Finally, in the religation step, the DNA 5'-OH attacks the covalent intermediate to expel the active-site tyrosine and restore the DNA phosphodiester backbone. The sequence is that of DNA topoisomerase 1 from Drosophila melanogaster (Fruit fly).